The primary structure comprises 170 residues: Peptide deformylase (170 aa).

Residues C94 and H136 each coordinate Fe cation. The active site involves E137. H140 lines the Fe cation pocket.

The protein belongs to the polypeptide deformylase family. It depends on Fe(2+) as a cofactor.

It catalyses the reaction N-terminal N-formyl-L-methionyl-[peptide] + H2O = N-terminal L-methionyl-[peptide] + formate. Functionally, removes the formyl group from the N-terminal Met of newly synthesized proteins. Requires at least a dipeptide for an efficient rate of reaction. N-terminal L-methionine is a prerequisite for activity but the enzyme has broad specificity at other positions. This chain is Peptide deformylase, found in Xylella fastidiosa (strain 9a5c).